A 309-amino-acid chain; its full sequence is Uridylate-specific endoribonuclease C (309 aa).

A signal peptide spans 1–22; that stretch reads MASGYDFGWIPVLLSLFTLTDA. The EndoU domain maps to 27-303; sequence VNQELSNIFN…IGTAYPKLLS (277 aa). N-linked (GlcNAc...) asparagine glycans are attached at residues Asn53 and Asn121. Residues His181, His197, and Lys242 contribute to the active site.

Belongs to the ENDOU family. Monomer. The cofactor is Mn(2+).

Its subcellular location is the secreted. It catalyses the reaction ribonucleotidyl-uridine-RNA = a 5'-end dephospho-uridine-RNA + a 3'-end 2',3'-cyclophospho-ribonucleotide-RNA. Endoribonuclease that cleaves single-stranded RNAs at 5' of uridylates and releases a product with a 2',3'-cyclic phosphate at the 3'-end. The UU and GU sites are more efficiently cleaved than CU and AU sites. The sequence is that of Uridylate-specific endoribonuclease C (endouc) from Danio rerio (Zebrafish).